The sequence spans 492 residues: Glutamyl-tRNA(Gln) amidotransferase subunit A (492 aa).

Active-site charge relay system residues include Lys78 and Ser158. Residue Ser182 is the Acyl-ester intermediate of the active site.

It belongs to the amidase family. GatA subfamily. Heterotrimer of A, B and C subunits.

It carries out the reaction L-glutamyl-tRNA(Gln) + L-glutamine + ATP + H2O = L-glutaminyl-tRNA(Gln) + L-glutamate + ADP + phosphate + H(+). In terms of biological role, allows the formation of correctly charged Gln-tRNA(Gln) through the transamidation of misacylated Glu-tRNA(Gln) in organisms which lack glutaminyl-tRNA synthetase. The reaction takes place in the presence of glutamine and ATP through an activated gamma-phospho-Glu-tRNA(Gln). This is Glutamyl-tRNA(Gln) amidotransferase subunit A from Rickettsia akari (strain Hartford).